The following is a 189-amino-acid chain: Probable nicotinate-nucleotide adenylyltransferase (189 aa).

It belongs to the NadD family.

It catalyses the reaction nicotinate beta-D-ribonucleotide + ATP + H(+) = deamido-NAD(+) + diphosphate. It functions in the pathway cofactor biosynthesis; NAD(+) biosynthesis; deamido-NAD(+) from nicotinate D-ribonucleotide: step 1/1. In terms of biological role, catalyzes the reversible adenylation of nicotinate mononucleotide (NaMN) to nicotinic acid adenine dinucleotide (NaAD). The protein is Probable nicotinate-nucleotide adenylyltransferase of Hydrogenobaculum sp. (strain Y04AAS1).